Reading from the N-terminus, the 121-residue chain is UPF0344 protein BCA_1194 (121 aa).

A run of 4 helical transmembrane segments spans residues 6–26 (ITAW…YSAG), 38–58 (LMYI…MKTA), 65–85 (WYGL…MVLV), and 92–112 (ATGA…YLGL).

Belongs to the UPF0344 family.

It is found in the cell membrane. The sequence is that of UPF0344 protein BCA_1194 from Bacillus cereus (strain 03BB102).